We begin with the raw amino-acid sequence, 638 residues long: DNA-directed RNA polymerase I subunit RPA1 (638 aa).

Acidic residues predominate over residues 297-317; sequence EYDEEDDESSGESEVREGDEE. The interval 297 to 321 is disordered; the sequence is EYDEEDDESSGESEVREGDEEQEKK.

This sequence belongs to the RNA polymerase beta' chain family. In terms of assembly, each class of RNA polymerase is assembled from 9 to 14 different polypeptides. This subunit is the largest component of RNA polymerase I.

The protein resides in the nucleus. It carries out the reaction RNA(n) + a ribonucleoside 5'-triphosphate = RNA(n+1) + diphosphate. DNA-dependent RNA polymerase catalyzes the transcription of DNA into RNA using the four ribonucleoside triphosphates as substrates. RNA polymerase I is essentially used to transcribe ribosomal DNA units. This chain is DNA-directed RNA polymerase I subunit RPA1 (RPA1), found in Euplotoides octocarinatus (Freshwater ciliate).